A 281-amino-acid polypeptide reads, in one-letter code: tRNA uridine(34) hydroxylase (281 aa).

The 94-residue stretch at 121–214 (SQPDVLVIDT…YLEKTHNKSG (94 aa)) folds into the Rhodanese domain. Cys-174 serves as the catalytic Cysteine persulfide intermediate.

It belongs to the TrhO family.

The catalysed reaction is uridine(34) in tRNA + AH2 + O2 = 5-hydroxyuridine(34) in tRNA + A + H2O. In terms of biological role, catalyzes oxygen-dependent 5-hydroxyuridine (ho5U) modification at position 34 in tRNAs. This is tRNA uridine(34) hydroxylase from Wolbachia pipientis subsp. Culex pipiens (strain wPip).